A 79-amino-acid polypeptide reads, in one-letter code: Sulfur carrier protein TusA (79 aa).

Cys-17 serves as the catalytic Cysteine persulfide intermediate.

Belongs to the sulfur carrier protein TusA family.

It is found in the cytoplasm. Functionally, sulfur carrier protein which probably makes part of a sulfur-relay system. The polypeptide is Sulfur carrier protein TusA (Pseudoalteromonas translucida (strain TAC 125)).